We begin with the raw amino-acid sequence, 302 residues long: Protoheme IX farnesyltransferase 1 (302 aa).

Transmembrane regions (helical) follow at residues 27–47, 49–69, 98–118, 121–141, 149–169, 175–195, 228–248, and 281–301; these read VVAL…VTDF, WIQA…AAAF, SVAI…YAWV, LTAW…TMYL, IVIA…AVTG, AWLL…ALAI, LLTL…IYLF, and IYHL…GMVL.

Belongs to the UbiA prenyltransferase family. Protoheme IX farnesyltransferase subfamily.

Its subcellular location is the cell inner membrane. It catalyses the reaction heme b + (2E,6E)-farnesyl diphosphate + H2O = Fe(II)-heme o + diphosphate. It functions in the pathway porphyrin-containing compound metabolism; heme O biosynthesis; heme O from protoheme: step 1/1. In terms of biological role, converts heme B (protoheme IX) to heme O by substitution of the vinyl group on carbon 2 of heme B porphyrin ring with a hydroxyethyl farnesyl side group. This is Protoheme IX farnesyltransferase 1 from Vibrio parahaemolyticus serotype O3:K6 (strain RIMD 2210633).